Here is a 201-residue protein sequence, read N- to C-terminus: Large ribosomal subunit protein uL4 (201 aa).

The segment at 44–68 is disordered; it reads RAQKSRAEVSGSGRKPWRQKGTGRA.

The protein belongs to the universal ribosomal protein uL4 family. Part of the 50S ribosomal subunit.

In terms of biological role, one of the primary rRNA binding proteins, this protein initially binds near the 5'-end of the 23S rRNA. It is important during the early stages of 50S assembly. It makes multiple contacts with different domains of the 23S rRNA in the assembled 50S subunit and ribosome. Forms part of the polypeptide exit tunnel. This is Large ribosomal subunit protein uL4 from Buchnera aphidicola subsp. Acyrthosiphon pisum (strain APS) (Acyrthosiphon pisum symbiotic bacterium).